Consider the following 1400-residue polypeptide: Tensin-2 (1400 aa).

The segment at 31–79 (PHSFREKVFRKKTPVCAVCKVTIDGTGVSCRVCKVATHRKCEAKVTSSC) adopts a Phorbol-ester/DAG-type zinc-finger fold. T91 bears the Phosphothreonine mark. Residues S118 and S120 each carry the phosphoserine modification. Residues 122 to 294 (DPLMERRWDL…SYFSGLLSGS (173 aa)) form the Phosphatase tensin-type domain. The Phosphocysteine intermediate role is filled by C231. The C2 tensin-type domain maps to 299–425 (SSPLFLHYVF…ASVEFVFSSS (127 aa)). Residues 425 to 444 (SPEKVKGNTPRNDPSVSVDY) form a disordered region. Residues 433 to 444 (TPRNDPSVSVDY) are compositionally biased toward polar residues. Residue S455 is modified to Phosphoserine. A Phosphotyrosine modification is found at Y456. S466 bears the Phosphoserine mark. T474 carries the post-translational modification Phosphothreonine. The residue at position 481 (S481) is a Phosphoserine. The residue at position 483 (Y483) is a Phosphotyrosine. Positions 488 to 536 (RVPRQTPPAPSPELPPPPMLSVSSDSGHSSTLTTEHTAESPGRPPPTAA) are disordered. Residues 492–506 (QTPPAPSPELPPPPM) show a composition bias toward pro residues. R555 is subject to Omega-N-methylarginine. A disordered region spans residues 809–1114 (CGSPSEGRGY…DVTQPPEHPL (306 aa)). S820, S825, S830, S832, and S835 each carry phosphoserine. Composition is skewed to polar residues over residues 898 to 917 (CSAS…SSPV) and 929 to 940 (TRSPSLAPTQRL). A Phosphothreonine modification is found at T909. Residues S931, S941, and S972 each carry the phosphoserine modification. T977 carries the post-translational modification Phosphothreonine. Phosphoserine occurs at positions 991 and 1003. Residues 1046 to 1056 (PEPPQSSPTPA) are compositionally biased toward pro residues. Polar residues predominate over residues 1082–1098 (SGQQPSPPARSTNQHVT). S1087 carries the post-translational modification Phosphoserine. Residues 1131–1238 (WYKPHLSRDQ…SLPCCLRIPS (108 aa)) form the SH2 domain. Position 1173 is a phosphothreonine (T1173). S1238 carries the post-translational modification Phosphoserine. The 134-residue stretch at 1266 to 1399 (ACSVLYLTSV…FITKVLLGQR (134 aa)) folds into the PTB domain.

This sequence belongs to the PTEN phosphatase protein family. Interacts with AXL. Interacts with SYK; leading to its phosphorylation. Interacts with SQSTM1 (via PB1 domain); the interaction leads to sequestration of TNS2 in cytoplasmic aggregates with SQSTM1 and promotes TNS2 ubiquitination and proteasomal degradation. In terms of processing, ubiquitinated following sequestration in cytoplasmic aggregates with SQSTM1, leading to proteasomal degradation. In terms of tissue distribution, in the adult kidney, expressed mainly in glomeruli (at protein level). In the newborn kidney, localizes on the basal surface of podocytes along the glomerular basement membrane and not in endothelial cells. Low expression levels in anabolic skeletal muscles.

The protein resides in the cell junction. It localises to the focal adhesion. The protein localises to the cell membrane. Its subcellular location is the cytoplasm. It catalyses the reaction O-phospho-L-tyrosyl-[protein] + H2O = L-tyrosyl-[protein] + phosphate. In terms of biological role, tyrosine-protein phosphatase which regulates cell motility, proliferation and muscle-response to insulin. Phosphatase activity is mediated by binding to phosphatidylinositol-3,4,5-triphosphate (PtdIns(3,4,5)P3) via the SH2 domain. In muscles and under catabolic conditions, dephosphorylates IRS1 leading to its degradation and muscle atrophy. Negatively regulates PI3K-AKT pathway activation. Dephosphorylates nephrin NPHS1 in podocytes which affects mTORC1 complex activity. Under normal glucose conditions, NPHS1 outcompetes IRS1 for binding to phosphatidylinositol 3-kinase (PI3K) which balances mTORC1 activity but high glucose conditions lead to up-regulation of TNS2, increased NPHS1 dephosphorylation and activation of mTORC1, contributing to podocyte hypertrophy and proteinuria. Required for correct podocyte morphology, podocyte-glomerular basement membrane interaction and integrity of the glomerular filtration barrier. Enhances RHOA activation in the presence of DLC1. Plays a role in promoting DLC1-dependent remodeling of the extracellular matrix. This is Tensin-2 (Tns2) from Mus musculus (Mouse).